The chain runs to 501 residues: TNF receptor-associated factor 2 (501 aa).

N-acetylalanine is present on alanine 2. Position 5 is a phosphoserine (serine 5). Threonine 7 carries the phosphothreonine modification. Serine 11 carries the post-translational modification Phosphoserine. The residue at position 22 (threonine 22) is a Phosphothreonine. Residue lysine 31 forms a Glycyl lysine isopeptide (Lys-Gly) (interchain with G-Cter in ubiquitin) linkage. Residues 34–73 form an RING-type zinc finger; it reads CSACKNILRRPFQAQCGHRYCSFCLTSILSSGPQNCAACV. A Phosphothreonine; by PKC modification is found at threonine 117. TRAF-type zinc fingers lie at residues 124–180 and 177–233; these read CHEG…VHYE and VHYE…ENLQ. The tract at residues 283–293 is important for interaction with BIRC2 and BIRC3; it reads ENIVCVLNREV. Residues 298–348 adopt a coiled-coil conformation; it reads VTAEACSRQHRLDQDKIEALSNKVQQLERSIGLKDLAMADLEQKVSELEVS. Lysine 320 is covalently cross-linked (Glycyl lysine isopeptide (Lys-Gly) (interchain with G-Cter in ubiquitin)). Residues 351–496 enclose the MATH domain; sequence DGVFIWKISD…DDAIFIKAIV (146 aa).

This sequence belongs to the TNF receptor-associated factor family. A subfamily. In terms of assembly, homotrimer. Heterotrimer with TRAF1. Heterotrimer with TRAF3 (via TRAF domain). The domain containing the RING-type and the first TRAF-type zinc finger can also form homodimers (in vitro). Interacts with TNFRSF1B/TNFR2. Interacts with TNFRSF5/CD40. Interacts with TNFRSF4, TNFRSF7/CD27, TNFRSF8/CD30, TNFRSF9/CD137, TNFRSF11A/RANK, TNFRSF13B/TACI, TNFRSF14, TNFRSF16/NGFR, TNFRSF17/BCMA, TNFRSF18/AITR, TNFRSF19/TROY, TNFRSF19L/RELT and EDAR. Stimulation of TNF-alpha receptor TNFRSF1A leads to the formation of two distinct signaling complexes. Plasma membrane-bound complex I is composed of TNFRSF1A, TRADD, RIPK1, TRAF2 and BIRC2/c-IAP1 or BIRC3 which interacts with CHUCK/IKK-alpha, IKBKB/IKK-beta and IKBKG/IKK-gamma promoting cell survival. Subsequently, TRADD, RIPK1 and TRAF2 dissociate from TNFRSF1A and form cytoplasmic complex II with FADD and caspase CASP8 promoting cell apoptosis. Interacts with TRADD. Identified in a complex with TNFRSF1A, RIPK1 and IKBKB/IKK-beta. Interacts with RIPK2. Interacts with BIRC2 and BIRC3 N-terminus; a single BIRC2 or BIRC3 molecule interacts with a heterotrimer formed by TRAF1 and TRAF2, or a TRAF2 homotrimer. Identified in a complex composed of TRAF2, TRAF3, BIRC2 and BIRC3. Interacts with BIRC2; the interaction promotes BIRC2 stability. Interaction with BIRC2 and/or BIRC3 is essential for ubiquitination of IKBKE, degradation of NFKBIA and activation of NF-kappa-B. Within complex I, phosphorylated TRAF2 interacts (via 'Lys-63'-linked polyubiquitin chains) with CHUCK/IKK-alpha, IKBKB/IKK-beta, IKBKG/IKK-gamma TAB2, TAB3 and TAK1 in response to TNF-alpha stimulation. Within complex I, interacts with UXT isoform 1 (via TPQE motif); the interaction prevents the recruitment of FADD and CASP8/caspase 8 to complex I. Forms a complex composed of TNFRSF8/CD30 or TNFRSF1B/TNFR2, and TRAF1, TRAF2 and E3 ligase TRAIP. Within the complex, interacts with TRAIP; the interaction inhibits TRAF2-mediated NF-kappa B activation. Component of a complex composed of TANK and TBK1. Interacts with TRPC4AP. Interacts with MAP3K1/MEKK1, MAP3K5/ASK1 and MAP3K11/MLK3 in response to TNF-alpha stimulation; the interaction leads to JNK activation and interaction with MAP3K5 is inhibited by PRMT1. Component of a complex composed of MAP3K14/NIK BIRC3 and TRAF3; the interaction leads to BIRC2/3-mediated ubiquitination of TRAF3 upon CD40 engagement in a TRAF2-dependent manner. Interacts with MAP3K14/NIK in response to TNF-alpha stimulation; the interaction leads to NF-kappa B activation. Interacts with PEG3; the interaction may promote TRAF2-mediated NF-kappa B activation. Interacts with HIVEP3; the interaction may inhibit TNF-alpha-TRAF2-mediated NF-kappa B and JNK activation. Interacts with TANK/ITRAF; the interaction prevents interaction between TNFRSF1B/TNFR2 and TRAF2. Interacts with deubiquitinating enzyme CYLD; the interaction results in the deubiquitination and inactivation of TRAF2. Interacts with SIAH2; the interaction leads to TRAF2 ubiquitination and degradation. Interacts with E2 conjugating enzyme UBE2N/Ubc13, E3 ligase ITCH and RNF11 in response to TNF-alpha stimulation. Interacts with ubiquitin-editing enzyme TNFAIP3/A20 in response to TNF-alpha stimulation; the interaction promotes TRAF2 dissociation from UBE2N/Ubc13, ITCH, RNF11 and TAX1BP1 and prevents prolonged TRAF-2 ubiquitination. Interacts with TAX1BP1 in response to TNF-alpha stimulation; the interaction promotes TRAF2 dissociation from UBE2N/Ubc13 and TNFAIP3/A20, and prevents prolonged TRAF-2 ubiquitination. Interacts (via C-terminus) with EIF2AK2/PKR (via the kinase catalytic domain). Interacts with deubiquitinating enzyme USP48. Interacts with PTPN2; probably involved in TNF-mediated signaling. Interacts with Toll-like receptor TLR4/3 adapter TICAM1/TRIF; the interaction may promote TICAM1 ubiquitination. Interacts with kinase/endoribonuclease ERN1/IRE1 and DAB2IP in response to ER stress; the interaction requires DAB2IP. Interacts with ERN1/IRE1 and TAOK3 in response to ER stress; the interaction may promote TRAF2 phosphorylation. Interacts (via zinc fingers) with DAB2IP (via C-terminus PER domain) in response to TNF-alpha stimulation. Interacts with CASP8AP2/FLASH. Interacts with NFATC2IP; the interaction may repress IL-4 production in T cells. Interacts with kinase CDK9. Interacts with sphingosine kinase 1 SPHK1. Interacts with kinase TNIK. Interacts with TRAFD1. Interacts with DNA phosphodiesterase TDP2. Interacts with MAVS/IPS1. Interacts with CARD14. Interacts with GPS2. Interacts with XPNPEP3. Interacts with RIPK3. Interacts with RELL2. Interacts with LRRC19. Interacts with GAPDH; promoting TRAF2 ubiquitination. In terms of processing, phosphorylated at several serine residues within the first 128 amino acid residues. Phosphorylated at Thr-117 in response to signaling via TNF and TNFRSF1A. Phosphorylation at Thr-117 is required for 'Lys-63'-linked polyubiquitination, but not for 'Lys-48'-linked polyubiquitination. Phosphorylation at Thr-117 is important for interaction with IKKA and IKKB, activation of IKK and subsequent activation of NF-kappa-B. Post-translationally, undergoes both 'Lys-48'-linked and 'Lys-63'-linked polyubiquitination. Polyubiquitinated via 'Lys-63'-linked ubiquitin in response to TNF signaling; this requires prior phosphorylation at Thr-117. 'Lys-63'-linked polyubiquitination promotes TRAF2-mediated activation of NF-kappa-B. Can be polyubiquitinated at several Lys residues via 'Lys-48'-linked ubiquitin chains in response to TNF signaling, leading to proteasomal degradation. Autoubiquitinated, leading to its subsequent proteasomal degradation. Polyubiquitinated by BIRC2 and SIAH2, leading to its subsequent proteasomal degradation. Not ubiquitinated by BIRC3 or SIAH1. Deubiquitinated by CYLD, a protease that specifically cleaves 'Lys-63'-linked polyubiquitin chains. Ubiquination is inhibited by LRRC19; inhiits proteasomal degradation. Ubiquitinated at Lys-320 by the SCF(FBXL2) complex, leading to its degradation by the proteasome. Ubiquitinated by E3 ubiquitin-protein ligase complex containing FBXO7; leading to repression of NF-kappa-B signaling. In terms of tissue distribution, isoform 1 and isoform 2 are expressed in spleen, adipose tissues, skeletal muscles, thymus, testis, heart, lung, brain. Isoform 2 is very weakly expressed in heart, lung and brain.

It is found in the cytoplasm. The enzyme catalyses S-ubiquitinyl-[E2 ubiquitin-conjugating enzyme]-L-cysteine + [acceptor protein]-L-lysine = [E2 ubiquitin-conjugating enzyme]-L-cysteine + N(6)-ubiquitinyl-[acceptor protein]-L-lysine.. It functions in the pathway protein modification; protein ubiquitination. Has very low E3 ubiquitin ligase activity in the absence of sphingosine-1-phosphate. E3 ubiquitin ligase activity is strongly activated by cytoplasmic sphingosine-1-phosphate. Functionally, E3 ubiquitin-protein ligase that regulates activation of NF-kappa-B and JNK and plays a central role in the regulation of cell survival and apoptosis. Catalyzes 'Lys-63'-linked ubiquitination of target proteins, such as BIRC3, IKBKE, MLST8, RIPK1 and TICAM1. Is an essential constituent of several E3 ubiquitin-protein ligase complexes, where it promotes the ubiquitination of target proteins by bringing them into contact with other E3 ubiquitin ligases. Regulates BIRC2 and BIRC3 protein levels by inhibiting their autoubiquitination and subsequent degradation; this does not depend on the TRAF2 RING-type zinc finger domain. Plays a role in mediating activation of NF-kappa-B by EIF2AK2/PKR. In complex with BIRC2 or BIRC3, promotes ubiquitination of IKBKE. Acts as a regulator of mTORC1 and mTORC2 assembly by mediating 'Lys-63'-linked ubiquitination of MLST8, thereby inhibiting formation of the mTORC2 complex, while facilitating assembly of the mTORC1 complex. Required for normal antibody isotype switching from IgM to IgG. The polypeptide is TNF receptor-associated factor 2 (Traf2) (Mus musculus (Mouse)).